The primary structure comprises 333 residues: Ketol-acid reductoisomerase (NADP(+)) (333 aa).

The KARI N-terminal Rossmann domain occupies 6–186 (TRVYTECDAD…GALRAGAIQT (181 aa)). NADP(+) contacts are provided by residues 29–32 (YGSQ), K52, S55, S57, and 87–90 (DPAQ). H112 is an active-site residue. Residue G138 coordinates NADP(+). Residues 187-332 (TFTEETETDL…ARLRALFSWS (146 aa)) enclose the KARI C-terminal knotted domain. Residues D195, E199, E231, and E235 each contribute to the Mg(2+) site. Residue S256 coordinates substrate.

Belongs to the ketol-acid reductoisomerase family. Requires Mg(2+) as cofactor.

It carries out the reaction (2R)-2,3-dihydroxy-3-methylbutanoate + NADP(+) = (2S)-2-acetolactate + NADPH + H(+). The catalysed reaction is (2R,3R)-2,3-dihydroxy-3-methylpentanoate + NADP(+) = (S)-2-ethyl-2-hydroxy-3-oxobutanoate + NADPH + H(+). Its pathway is amino-acid biosynthesis; L-isoleucine biosynthesis; L-isoleucine from 2-oxobutanoate: step 2/4. It functions in the pathway amino-acid biosynthesis; L-valine biosynthesis; L-valine from pyruvate: step 2/4. Its function is as follows. Involved in the biosynthesis of branched-chain amino acids (BCAA). Catalyzes an alkyl-migration followed by a ketol-acid reduction of (S)-2-acetolactate (S2AL) to yield (R)-2,3-dihydroxy-isovalerate. In the isomerase reaction, S2AL is rearranged via a Mg-dependent methyl migration to produce 3-hydroxy-3-methyl-2-ketobutyrate (HMKB). In the reductase reaction, this 2-ketoacid undergoes a metal-dependent reduction by NADPH to yield (R)-2,3-dihydroxy-isovalerate. The protein is Ketol-acid reductoisomerase (NADP(+)) of Tropheryma whipplei (strain TW08/27) (Whipple's bacillus).